Reading from the N-terminus, the 202-residue chain is Superoxide dismutase [Mn] (202 aa).

His-27 is a binding site for Mn(2+). 2 positions are modified to phosphothreonine: Thr-34 and Thr-70. Residues His-82, Asp-164, and His-168 each contribute to the Mn(2+) site.

The protein belongs to the iron/manganese superoxide dismutase family. As to quaternary structure, homodimer. It depends on Mn(2+) as a cofactor.

It catalyses the reaction 2 superoxide + 2 H(+) = H2O2 + O2. Functionally, destroys superoxide anion radicals which are normally produced within the cells and which are toxic to biological systems. The sequence is that of Superoxide dismutase [Mn] (sodA) from Halalkalibacterium halodurans (strain ATCC BAA-125 / DSM 18197 / FERM 7344 / JCM 9153 / C-125) (Bacillus halodurans).